Here is a 312-residue protein sequence, read N- to C-terminus: MMIKKNASSEDFFILLGFSNWPQLEVVLFVVILIFYLMTLTGNLFIIILSYVDSHLHTPMYFFLSNLSFLDLCHTTSSIPQLLVNLRGPEKTISYAGCMVQLYFVLALGIAECVLLVVMSYDRYVAVCRPLHYTVLMHPRFCHLLAAASWVIGFTISALHSSFTFWVPLCGHRLVDHFFCEVPALLRLSCVDTHANELTLMVMSSIFVLIPLILILTAYGAIARAVLSMQSTTGLQKVFRTCGAHLMVVSLFFIPVMCMYLQPPSENSPDQGKFIALFYTVVTPSLNPLIYTLRNKHVKGAAKRLLGWEWGK.

The Extracellular portion of the chain corresponds to 1 to 26 (MMIKKNASSEDFFILLGFSNWPQLEV). Asparagine 6 carries an N-linked (GlcNAc...) asparagine glycan. The chain crosses the membrane as a helical span at residues 27–50 (VLFVVILIFYLMTLTGNLFIIILS). The Cytoplasmic segment spans residues 51-58 (YVDSHLHT). Residues 59 to 80 (PMYFFLSNLSFLDLCHTTSSIP) traverse the membrane as a helical segment. Residues 81–101 (QLLVNLRGPEKTISYAGCMVQ) lie on the Extracellular side of the membrane. The cysteines at positions 98 and 190 are disulfide-linked. The helical transmembrane segment at 102–121 (LYFVLALGIAECVLLVVMSY) threads the bilayer. Topologically, residues 122–140 (DRYVAVCRPLHYTVLMHPR) are cytoplasmic. A helical transmembrane segment spans residues 141 to 159 (FCHLLAAASWVIGFTISAL). Residues 160 to 196 (HSSFTFWVPLCGHRLVDHFFCEVPALLRLSCVDTHAN) lie on the Extracellular side of the membrane. Residues 197-220 (ELTLMVMSSIFVLIPLILILTAYG) form a helical membrane-spanning segment. The Cytoplasmic portion of the chain corresponds to 221-237 (AIARAVLSMQSTTGLQK). Residues 238–260 (VFRTCGAHLMVVSLFFIPVMCMY) traverse the membrane as a helical segment. At 261–273 (LQPPSENSPDQGK) the chain is on the extracellular side. The chain crosses the membrane as a helical span at residues 274–293 (FIALFYTVVTPSLNPLIYTL). Over 294-312 (RNKHVKGAAKRLLGWEWGK) the chain is Cytoplasmic.

Belongs to the G-protein coupled receptor 1 family.

It is found in the cell membrane. Its function is as follows. Odorant receptor. This Homo sapiens (Human) protein is Olfactory receptor 2J2 (OR2J2).